Here is a 490-residue protein sequence, read N- to C-terminus: Aspartyl/glutamyl-tRNA(Asn/Gln) amidotransferase subunit B (490 aa).

It belongs to the GatB/GatE family. GatB subfamily. Heterotrimer of A, B and C subunits.

The enzyme catalyses L-glutamyl-tRNA(Gln) + L-glutamine + ATP + H2O = L-glutaminyl-tRNA(Gln) + L-glutamate + ADP + phosphate + H(+). It catalyses the reaction L-aspartyl-tRNA(Asn) + L-glutamine + ATP + H2O = L-asparaginyl-tRNA(Asn) + L-glutamate + ADP + phosphate + 2 H(+). Allows the formation of correctly charged Asn-tRNA(Asn) or Gln-tRNA(Gln) through the transamidation of misacylated Asp-tRNA(Asn) or Glu-tRNA(Gln) in organisms which lack either or both of asparaginyl-tRNA or glutaminyl-tRNA synthetases. The reaction takes place in the presence of glutamine and ATP through an activated phospho-Asp-tRNA(Asn) or phospho-Glu-tRNA(Gln). In Prochlorococcus marinus subsp. pastoris (strain CCMP1986 / NIES-2087 / MED4), this protein is Aspartyl/glutamyl-tRNA(Asn/Gln) amidotransferase subunit B.